A 347-amino-acid chain; its full sequence is Protein RecA (347 aa).

Position 66-73 (66-73 (GPESSGKT)) interacts with ATP.

The protein belongs to the RecA family.

It localises to the cytoplasm. In terms of biological role, can catalyze the hydrolysis of ATP in the presence of single-stranded DNA, the ATP-dependent uptake of single-stranded DNA by duplex DNA, and the ATP-dependent hybridization of homologous single-stranded DNAs. It interacts with LexA causing its activation and leading to its autocatalytic cleavage. This chain is Protein RecA, found in Methylococcus capsulatus (strain ATCC 33009 / NCIMB 11132 / Bath).